Consider the following 204-residue polypeptide: MKRLVTGLLALSLFLAACGQDSDQQKDGNKEKDDKAKTEQQDKKTNDSSKDKKDNKDDSKDVNKDNKDNSANDNQQQSNSNATNNDQNQTNNNQANNNQKSSYVAPYYGQNAAPVARQIYPFNGNKTQALQQLPNFQTALNAANNEANKFGSNNKVYNDYSIEEHNGNYKYVFSFKDPNANGKYSIVTVDYTGQAMVTDPNYQQ.

The signal sequence occupies residues 1–17 (MKRLVTGLLALSLFLAA). Positions 17-100 (ACGQDSDQQK…NNNQANNNQK (84 aa)) are disordered. A lipid anchor (N-palmitoyl cysteine) is attached at Cys18. The S-diacylglycerol cysteine moiety is linked to residue Cys18. A compositionally biased stretch (basic and acidic residues) spans 23–70 (DQQKDGNKEKDDKAKTEQQDKKTNDSSKDKKDNKDDSKDVNKDNKDNS). The span at 71–100 (ANDNQQQSNSNATNNDQNQTNNNQANNNQK) shows a compositional bias: low complexity.

The protein resides in the cell membrane. This is an uncharacterized protein from Staphylococcus aureus (strain MSSA476).